Reading from the N-terminus, the 385-residue chain is Putative 8-amino-7-oxononanoate synthase (385 aa).

Arg22 contributes to the substrate binding site. Gly109 to Tyr110 contacts pyridoxal 5'-phosphate. Residue His134 participates in substrate binding. Pyridoxal 5'-phosphate contacts are provided by residues Ser182, Asp207–His210, and Thr238–Lys241. An N6-(pyridoxal phosphate)lysine modification is found at Lys241. A substrate-binding site is contributed by Thr353.

The protein belongs to the class-II pyridoxal-phosphate-dependent aminotransferase family. BioF subfamily. In terms of assembly, homodimer. It depends on pyridoxal 5'-phosphate as a cofactor.

It carries out the reaction 6-carboxyhexanoyl-[ACP] + L-alanine + H(+) = (8S)-8-amino-7-oxononanoate + holo-[ACP] + CO2. It participates in cofactor biosynthesis; biotin biosynthesis. In terms of biological role, catalyzes the decarboxylative condensation of pimeloyl-[acyl-carrier protein] and L-alanine to produce 8-amino-7-oxononanoate (AON), [acyl-carrier protein], and carbon dioxide. The chain is Putative 8-amino-7-oxononanoate synthase (bioF) from Microcystis aeruginosa (strain NIES-843 / IAM M-2473).